The primary structure comprises 571 residues: Serine/threonine-protein kinase Nek7 (571 aa).

The Protein kinase domain maps to 19 to 277 (YHVVEQVRRG…LRNPSLQPYL (259 aa)). Residues 25–33 (VRRGKSSSD) and Lys48 contribute to the ATP site. Catalysis depends on Asp144, which acts as the Proton acceptor. Disordered stretches follow at residues 298–321 (SPKDKARRNSLPGKFGKERVSREK) and 338–363 (TETGSSSSSQPASSTNGAEDKLETKR). Residues 312–321 (FGKERVSREK) are compositionally biased toward basic and acidic residues. Residues 342–351 (SSSSSQPASS) show a composition bias toward low complexity.

It belongs to the protein kinase superfamily. NEK Ser/Thr protein kinase family. NIMA subfamily.

The catalysed reaction is L-seryl-[protein] + ATP = O-phospho-L-seryl-[protein] + ADP + H(+). The enzyme catalyses L-threonyl-[protein] + ATP = O-phospho-L-threonyl-[protein] + ADP + H(+). May be involved in plant development processes. The polypeptide is Serine/threonine-protein kinase Nek7 (NEK7) (Arabidopsis thaliana (Mouse-ear cress)).